We begin with the raw amino-acid sequence, 710 residues long: Early transcription factor 82 kDa subunit (710 aa).

Belongs to the poxviridae VETF large subunit family. In terms of assembly, heterodimer of a 70 kDa and a 82 kDa subunit. Part of the early transcription complex composed of ETF, RAP94/OPG109, and the DNA-directed RNA polymerase.

The protein localises to the virion. In terms of biological role, acts with RNA polymerase to initiate transcription from early gene promoters. Is recruited by the RPO-associated protein of 94 kDa RAP94/OPG109 to form the early transcription complex, which also contains the core RNA polymerase. ETF heterodimer binds to early gene promoters. The sequence is that of Early transcription factor 82 kDa subunit (OPG133) from Homo sapiens (Human).